A 379-amino-acid polypeptide reads, in one-letter code: MKILRKNHPLLKIVNHSFIDLPTPPNISSWWNFGSLLGVCLMIQILTGLFLAMHYTSDTTTAFSSVAHICRDVNYGWLIRYLHANGASMFFICLFIHVGRGIYYGSYVLSETWNIGIILFLTTMATAFVGYVLPWGQMSFWGATVITNLLSAIPYVGGTLVEWIWGGFSVDKATLTRFFAFHFILPFIITAFALVHLLFLHETGSNNPSGLNSDSDKIPFHPYYTIKDLLGILLLLLALMILALFFPDVLGDPDNFTPANPLNTPAHIKPEWYFLFAYTILRSIPNKLGGVLALILSILILAAFPLLNTSKQHGLIFRPITQTIYWTLIVNLLVLTWIGGQPVEYPFTTIGQIASITYFTTIIILMPVSNTIENNIIKL.

A run of 4 helical transmembrane segments spans residues 33–53 (FGSL…FLAM), 77–98 (WLIR…FIHV), 113–133 (WNIG…GYVL), and 178–198 (FFAF…VHLL). 2 residues coordinate heme b: His83 and His97. 2 residues coordinate heme b: His182 and His196. His201 is an a ubiquinone binding site. Transmembrane regions (helical) follow at residues 226–246 (IKDL…ALFF), 288–308 (LGGV…PLLN), 320–340 (ITQT…WIGG), and 347–367 (FTTI…ILMP).

This sequence belongs to the cytochrome b family. The cytochrome bc1 complex contains 11 subunits: 3 respiratory subunits (MT-CYB, CYC1 and UQCRFS1), 2 core proteins (UQCRC1 and UQCRC2) and 6 low-molecular weight proteins (UQCRH/QCR6, UQCRB/QCR7, UQCRQ/QCR8, UQCR10/QCR9, UQCR11/QCR10 and a cleavage product of UQCRFS1). This cytochrome bc1 complex then forms a dimer. Heme b is required as a cofactor.

It localises to the mitochondrion inner membrane. In terms of biological role, component of the ubiquinol-cytochrome c reductase complex (complex III or cytochrome b-c1 complex) that is part of the mitochondrial respiratory chain. The b-c1 complex mediates electron transfer from ubiquinol to cytochrome c. Contributes to the generation of a proton gradient across the mitochondrial membrane that is then used for ATP synthesis. The polypeptide is Cytochrome b (MT-CYB) (Akodon aerosus (Highland grass mouse)).